A 413-amino-acid chain; its full sequence is Gamma-DL-glutamyl hydrolase (413 aa).

Positions 1-32 (MNTLANWKKFLLVAVIICFLVPIMTKAEIAEA) are cleaved as a signal peptide. NlpC/P60 domains lie at 33–159 (DTSS…RRIA), 163–287 (ATAD…RRFD), and 291–413 (IPKE…IRVQ). C194 (nucleophile) is an active-site residue. H247 functions as the Proton acceptor in the catalytic mechanism. The active site involves Q259.

This sequence belongs to the peptidase C40 family.

Its subcellular location is the secreted. It is found in the cell wall. With respect to regulation, inhibited by pretreatment with 1 mM 4-(hydroxymercuri)benzoate, a sulfhydryl inhibitor. In terms of biological role, cleaves, in an endo-type manner, the gamma-glutamyl bond between D-glutamate and L-glutamate of poly-gamma-glutamate (PGA). The polypeptide is Gamma-DL-glutamyl hydrolase (pgdS) (Bacillus subtilis (strain 168)).